Reading from the N-terminus, the 1116-residue chain is Protein translocase subunit SecA (1116 aa).

Residues glutamine 176, 194 to 198 (GEGKT), and aspartate 693 each bind ATP.

The protein belongs to the SecA family. In terms of assembly, monomer and homodimer. Part of the essential Sec protein translocation apparatus which comprises SecA, SecYEG and auxiliary proteins SecDF. Other proteins may also be involved.

Its subcellular location is the cell inner membrane. It localises to the cytoplasm. The catalysed reaction is ATP + H2O + cellular proteinSide 1 = ADP + phosphate + cellular proteinSide 2.. Its function is as follows. Part of the Sec protein translocase complex. Interacts with the SecYEG preprotein conducting channel. Has a central role in coupling the hydrolysis of ATP to the transfer of proteins into and across the cell membrane, serving as an ATP-driven molecular motor driving the stepwise translocation of polypeptide chains across the membrane. This chain is Protein translocase subunit SecA, found in Amoebophilus asiaticus (strain 5a2).